We begin with the raw amino-acid sequence, 69 residues long: DNA gyrase inhibitor YacG (69 aa).

Residues C7, C10, C26, and C30 each coordinate Zn(2+).

The protein belongs to the DNA gyrase inhibitor YacG family. Interacts with GyrB. The cofactor is Zn(2+).

Inhibits all the catalytic activities of DNA gyrase by preventing its interaction with DNA. Acts by binding directly to the C-terminal domain of GyrB, which probably disrupts DNA binding by the gyrase. The protein is DNA gyrase inhibitor YacG of Shewanella baltica (strain OS155 / ATCC BAA-1091).